The primary structure comprises 438 residues: Coenzyme A disulfide reductase (438 aa).

FAD is bound at residue 8 to 33; it reads GAVAGGATCASQIRRLDKESDIIIFE. Residues Thr-15, Gln-19, Arg-22, Ser-39, and Asn-42 each coordinate substrate. Residue Cys-43 is the Nucleophile of the active site. The active-site Redox-active is Cys-43. Lys-71 is a binding site for substrate. Position 151-166 (151-166) interacts with NADP(+); the sequence is VLVVGAGYVSLEVLEN. 267 to 277 is a binding site for FAD; sequence TNVPNIYAIGD. Substrate is bound at residue His-299. An FAD-binding site is contributed by Tyr-419. Lys-427 contacts substrate.

The protein belongs to the class-III pyridine nucleotide-disulfide oxidoreductase family. As to quaternary structure, homodimer. FAD serves as cofactor.

It carries out the reaction NADP(+) + 2 CoA = CoA-disulfide + NADPH + H(+). Its function is as follows. Catalyzes specifically the NADPH-dependent reduction of coenzyme A disulfide. The protein is Coenzyme A disulfide reductase of Staphylococcus aureus (strain MSSA476).